An 891-amino-acid polypeptide reads, in one-letter code: Mating-type protein A-alpha Y1 (891 aa).

Positions 146-205 (SKKPRPKFHSEYTPLLELYFRFNAYPTYADRRVLAEKTGMLTRQITVWFQNHRRRAKGPL) form a DNA-binding region, homeobox. Disordered stretches follow at residues 241–291 (PITL…PSTL), 319–339 (DIEM…LPKG), 393–437 (TRKP…RRVS), 610–718 (ARRK…EQSL), and 800–822 (MNWT…GGDE). Residues 244–257 (LGNNKTPDLTTSSR) show a composition bias toward polar residues. Residues 328 to 337 (PKRRKMKKLP) show a composition bias toward basic residues. A compositionally biased stretch (low complexity) spans 427–437 (ASSTVPSRRVS). Residues 627 to 638 (KKDKKERKKAGL) are compositionally biased toward basic residues. 2 stretches are compositionally biased toward low complexity: residues 651–667 (VSSR…TSAR) and 676–710 (QPSS…SMPS). A compositionally biased stretch (polar residues) spans 800-818 (MNWTASVGSNAQDPASQES).

It is found in the nucleus. In terms of biological role, specifies A-alpha-1 mating-type. May regulate the expression of genes specific to the homokaryotic cell type. The polypeptide is Mating-type protein A-alpha Y1 (Schizophyllum commune (Split gill fungus)).